The primary structure comprises 380 residues: Protein trichome birefringence-like 38 (380 aa).

A helical; Signal-anchor for type II membrane protein transmembrane segment spans residues 7–29 (SLLLLFLPLLTVTILSGVEQAFA). The GDS motif motif lies at 134–136 (GDS). The short motif at 357–371 (DCSHWCLPGLPDTWN) is the DCXHWCLPGXXDXWN motif element.

The protein belongs to the PC-esterase family. TBL subfamily.

The protein localises to the membrane. May act as a bridging protein that binds pectin and other cell wall polysaccharides. Probably involved in maintaining esterification of pectins. May be involved in the specific O-acetylation of cell wall polymers. The sequence is that of Protein trichome birefringence-like 38 (TBL38) from Arabidopsis thaliana (Mouse-ear cress).